A 562-amino-acid chain; its full sequence is NAD-dependent malic enzyme (562 aa).

Tyr101 acts as the Proton donor in catalysis. Arg154 serves as a coordination point for NAD(+). Catalysis depends on Lys172, which acts as the Proton acceptor. The a divalent metal cation site is built by Glu243, Asp244, and Asp267. Asp267 and Asn415 together coordinate NAD(+).

The protein belongs to the malic enzymes family. As to quaternary structure, homotetramer. Requires Mg(2+) as cofactor. Mn(2+) is required as a cofactor.

It carries out the reaction (S)-malate + NAD(+) = pyruvate + CO2 + NADH. The catalysed reaction is oxaloacetate + H(+) = pyruvate + CO2. This chain is NAD-dependent malic enzyme, found in Shewanella pealeana (strain ATCC 700345 / ANG-SQ1).